Here is a 149-residue protein sequence, read N- to C-terminus: 17 kDa major membrane protein (149 aa).

Residues 1-19 (MKKIIKLSLLSLSIAGLAS) form the signal peptide. A lipid anchor (N-palmitoyl cysteine) is attached at C20. C20 carries S-diacylglycerol cysteine lipidation.

Its subcellular location is the cell outer membrane. The protein is 17 kDa major membrane protein of Francisella tularensis subsp. holarctica (strain LVS).